The following is a 364-amino-acid chain: Spermidine/putrescine import ATP-binding protein PotA (364 aa).

The ABC transporter domain maps to 5 to 235 (LSFKGVTKGF…PVNRFVADFI (231 aa)). 37 to 44 (GPSGCGKT) contacts ATP.

The protein belongs to the ABC transporter superfamily. Spermidine/putrescine importer (TC 3.A.1.11.1) family. As to quaternary structure, the complex is composed of two ATP-binding proteins (PotA), two transmembrane proteins (PotB and PotC) and a solute-binding protein (PotD).

The protein resides in the cell membrane. The catalysed reaction is ATP + H2O + polyamine-[polyamine-binding protein]Side 1 = ADP + phosphate + polyamineSide 2 + [polyamine-binding protein]Side 1.. In terms of biological role, part of the ABC transporter complex PotABCD involved in spermidine/putrescine import. Responsible for energy coupling to the transport system. This is Spermidine/putrescine import ATP-binding protein PotA from Staphylococcus haemolyticus (strain JCSC1435).